The primary structure comprises 353 residues: MSLPLSLQTLVKKTVASQCLSIDEHCILKHCGLWWHDVPLKLCMDRGQIQIKSGFLGEDIDLHIALIIAVKENNYSLIKLFTEWGAHINYSLLSINTEHIRELCRQLGAKETLEDDDVFRIFTKIMHNKTSGRIILCHDIFMNNPNIENKFTIQLRGLICKRLWGLIEIKETDELNDLLVKYWYAKAVQYECKDAICFLEEKYTDLNEWRLKCLLYFNKIYELHEMYHKEKVQIDVHDMICLASTKDNNPLTIYYCYALGGNINQAMLTSIQYYNIGNIFFCIDLGGNAFEEGRAIAEQKGYNFLSHSLALDIFSSDASLPLNLKDPEEISSFLKDYKSKNLSIIWEYSHNIL.

It belongs to the asfivirus MGF 360 family.

In terms of biological role, plays a role in virus cell tropism, and may be required for efficient virus replication in macrophages. The chain is Protein MGF 360-13L from Ornithodoros (relapsing fever ticks).